The following is an 806-amino-acid chain: Protein translocase subunit SecA 2 (806 aa).

ATP is bound by residues Q122, 140–144 (GEGKT), and D533.

It belongs to the SecA family. In terms of assembly, monomer and homodimer. Part of the essential Sec protein translocation apparatus which comprises SecA, SecYEG and auxiliary proteins SecDF. Other proteins may also be involved.

Its subcellular location is the cell membrane. It is found in the cytoplasm. The enzyme catalyses ATP + H2O + cellular proteinSide 1 = ADP + phosphate + cellular proteinSide 2.. In terms of biological role, part of the Sec protein translocase complex. Interacts with the SecYEG preprotein conducting channel. Has a central role in coupling the hydrolysis of ATP to the transfer of proteins into and across the cell membrane, serving as an ATP-driven molecular motor driving the stepwise translocation of polypeptide chains across the membrane. This chain is Protein translocase subunit SecA 2, found in Mycobacterium ulcerans (strain Agy99).